The following is a 765-amino-acid chain: Transcription factor SKN7 (765 aa).

Positions 1–42 (MPPTNGEGGSQQPQQQQQQQQQQQQQQQQQQQQQQGGSGSSD) are disordered. The span at 11 to 35 (QQPQQQQQQQQQQQQQQQQQQQQQQ) shows a compositional bias: low complexity. Positions 40-145 (SSDFVRKLYK…NLDNIRRKAP (106 aa)) are DNA-binding domain. Positions 157–198 (FNASQQQIAALSESLQATQQQLQALQQQCYELEKTNRLLVSE) form a coiled coil. The segment at 160–220 (SQQQIAALSE…QASNEIINHL (61 aa)) is hydrophobic repeat HR-A/B. Positions 371-391 (SSSQITPSQITPPPKDQMSSM) are disordered. The Response regulatory domain occupies 398-514 (RVLLVEDDKT…NMSRLLRRHL (117 aa)). A 4-aspartylphosphate modification is found at Asp449. A transactivation domain region spans residues 542–765 (TAGPATTGVG…PGVGVAGFVQ (224 aa)). The span at 550–564 (VGVGVAGAPSGGAHG) shows a compositional bias: gly residues. Disordered stretches follow at residues 550 to 647 (VGVG…PAGL) and 686 to 765 (PGAM…GFVQ). The span at 569–584 (AQHQQGYAMAPPTTMQ) shows a compositional bias: low complexity. Residues 626–636 (QPPPPPTPTQP) are compositionally biased toward pro residues. 2 stretches are compositionally biased toward low complexity: residues 637–647 (SPTSAAPPAGL) and 699–715 (GVGH…AGAR). Over residues 755-765 (HPGVGVAGFVQ) the composition is skewed to gly residues.

This sequence belongs to the SKN7 family. In terms of assembly, homotrimer.

The protein localises to the nucleus. Functionally, transcription factor that is part of a SLN1-YPD1-SKN7 two-component regulatory system, which controls gene expression in response to changes in the osmolarity of the extracellular environment. Under low osmotic conditions, phosphorylated and activated by the phosphorelay intermediate protein YPD1. Also activated in response to oxidative stress, independent on the two-component regulatory system. Regulates heat shock genes in response to oxidative stress and genes involved in cell wall integrity in response to osmotic changes. This chain is Transcription factor SKN7, found in Chaetomium thermophilum (strain DSM 1495 / CBS 144.50 / IMI 039719) (Thermochaetoides thermophila).